The primary structure comprises 395 residues: Chorismate synthase (395 aa).

Arg48 provides a ligand contact to NADP(+). 125-127 (RSS) provides a ligand contact to FMN. A disordered region spans residues 264–292 (RNEDWTFDDGESFDHVESEEGDPVPVGND). Residues Gly298, 313-317 (HAPTS), and Arg340 contribute to the FMN site. Residues 373–395 (PDRVDGNPGQYDTDYHPSSPDND) form a disordered region.

This sequence belongs to the chorismate synthase family. FMNH2 serves as cofactor.

It carries out the reaction 5-O-(1-carboxyvinyl)-3-phosphoshikimate = chorismate + phosphate. It participates in metabolic intermediate biosynthesis; chorismate biosynthesis; chorismate from D-erythrose 4-phosphate and phosphoenolpyruvate: step 7/7. In terms of biological role, catalyzes the anti-1,4-elimination of the C-3 phosphate and the C-6 proR hydrogen from 5-enolpyruvylshikimate-3-phosphate (EPSP) to yield chorismate, which is the branch point compound that serves as the starting substrate for the three terminal pathways of aromatic amino acid biosynthesis. This reaction introduces a second double bond into the aromatic ring system. The protein is Chorismate synthase of Halorubrum lacusprofundi (strain ATCC 49239 / DSM 5036 / JCM 8891 / ACAM 34).